The chain runs to 488 residues: UDP-N-acetylmuramoyl-L-alanyl-D-glutamate--2,6-diaminopimelate ligase (488 aa).

Position 29 (S29) interacts with UDP-N-acetyl-alpha-D-muramoyl-L-alanyl-D-glutamate. Position 108 to 114 (108 to 114) interacts with ATP; sequence GTSGKTS. UDP-N-acetyl-alpha-D-muramoyl-L-alanyl-D-glutamate contacts are provided by residues 150–151, S177, Q183, and R185; that span reads TT. Residue K217 is modified to N6-carboxylysine. Meso-2,6-diaminopimelate is bound by residues R381, 405–408, G453, and E457; that span reads DNPR. Positions 405–408 match the Meso-diaminopimelate recognition motif motif; the sequence is DNPR.

This sequence belongs to the MurCDEF family. MurE subfamily. Requires Mg(2+) as cofactor. Post-translationally, carboxylation is probably crucial for Mg(2+) binding and, consequently, for the gamma-phosphate positioning of ATP.

The protein localises to the cytoplasm. It carries out the reaction UDP-N-acetyl-alpha-D-muramoyl-L-alanyl-D-glutamate + meso-2,6-diaminopimelate + ATP = UDP-N-acetyl-alpha-D-muramoyl-L-alanyl-gamma-D-glutamyl-meso-2,6-diaminopimelate + ADP + phosphate + H(+). It participates in cell wall biogenesis; peptidoglycan biosynthesis. Its function is as follows. Catalyzes the addition of meso-diaminopimelic acid to the nucleotide precursor UDP-N-acetylmuramoyl-L-alanyl-D-glutamate (UMAG) in the biosynthesis of bacterial cell-wall peptidoglycan. This chain is UDP-N-acetylmuramoyl-L-alanyl-D-glutamate--2,6-diaminopimelate ligase, found in Brucella melitensis biotype 1 (strain ATCC 23456 / CCUG 17765 / NCTC 10094 / 16M).